A 660-amino-acid polypeptide reads, in one-letter code: Kinesin-like protein KIF2A (660 aa).

The interval 1 to 140 (MVTSLNEDNE…QQELREKRAQ (140 aa)) is disordered. Residues 1 to 171 (MVTSLNEDNE…LDYRPLTTAD (171 aa)) form a globular region. S48 bears the Phosphoserine mark. 2 positions are modified to phosphothreonine: T51 and T70. S73 bears the Phosphoserine mark. Residue K75 is modified to N6-acetyllysine. The segment covering 96–106 (LPEQSSSAQQN) has biased composition (polar residues). The span at 113 to 140 (CVKEVEKLQEKREKRRLQQQELREKRAQ) shows a compositional bias: basic and acidic residues. The 331-residue stretch at 177–507 (RICVCVRKRP…LRYANRVKEL (331 aa)) folds into the Kinesin motor domain. Residue 267-274 (GQTGSGKT) coordinates ATP. Positions 614–653 (ATQLEAILEQKIDILTELRDKVKSFRAALQEEEQASKQIN) form a coiled coil.

Belongs to the TRAFAC class myosin-kinesin ATPase superfamily. Kinesin family. MCAK/KIF2 subfamily. As to quaternary structure, interacts with AURKA and PLK1. Interacts with PSRC1. Interacts with MCRS1; the interaction enhances recruitment of KIF2A to the minus ends of spindle microtubules which promotes chromosome alignment.

Its subcellular location is the cytoplasm. The protein resides in the cytoskeleton. The protein localises to the microtubule organizing center. It localises to the centrosome. It is found in the spindle pole. Its subcellular location is the spindle. Functionally, plus end-directed microtubule-dependent motor required for normal brain development. May regulate microtubule dynamics during axonal growth. Required for normal progression through mitosis. Required for normal congress of chromosomes at the metaphase plate. Required for normal spindle dynamics during mitosis. Promotes spindle turnover. Implicated in formation of bipolar mitotic spindles. Has microtubule depolymerization activity. The sequence is that of Kinesin-like protein KIF2A (KIF2A) from Bos taurus (Bovine).